Consider the following 620-residue polypeptide: Phosphopentomutase (620 aa).

Arg71 and Ser173 together coordinate alpha-D-glucose 1,6-bisphosphate. The active-site Phosphoserine intermediate is the Ser173. Mg(2+) contacts are provided by Ser173, Asp330, Asp332, and Asp334. Position 173 is a phosphoserine (Ser173). Alpha-D-glucose 1,6-bisphosphate contacts are provided by Asp334, Arg335, Thr408, Glu432, and Lys446.

The protein belongs to the phosphohexose mutase family. Monomer. Mg(2+) serves as cofactor. As to expression, highly expressed in lung, spleen and thymus. Expressed at lower levels in liver, brain, kidney, skeletal muscle, testis and heart.

It is found in the cytoplasm. The protein localises to the cytosol. The catalysed reaction is alpha-D-ribose 1-phosphate = D-ribose 5-phosphate. The enzyme catalyses 2-deoxy-alpha-D-ribose 1-phosphate = 2-deoxy-D-ribose 5-phosphate. It carries out the reaction alpha-D-glucose 1-phosphate = alpha-D-glucose 6-phosphate. It catalyses the reaction O-phospho-L-seryl-[protein] + alpha-D-glucose 1-phosphate = alpha-D-glucose 1,6-bisphosphate + L-seryl-[protein]. The catalysed reaction is alpha-D-glucose 1,6-bisphosphate + L-seryl-[protein] = O-phospho-L-seryl-[protein] + alpha-D-glucose 6-phosphate. In terms of biological role, catalyzes the conversion of the nucleoside breakdown products ribose-1-phosphate and deoxyribose-1-phosphate to the corresponding 5-phosphopentoses. Catalyzes the reversible isomerization of alpha-D-glucose 1-phosphate to alpha-D-glucose 6-phosphate but with a lower catalytic efficiency. The mechanism proceeds via the intermediate compound alpha-D-glucose 1,6-bisphosphate. In vitro, also has a low glucose 1,6-bisphosphate synthase activity which is most probably not physiologically relevant. In Mus musculus (Mouse), this protein is Phosphopentomutase.